The following is a 179-amino-acid chain: Cell division protein SepF (179 aa).

A disordered region spans residues 22–55; the sequence is LPYEKRDEPVFTSVNSSQEPALPMNQPSQSAGTK. Residues 33–55 are compositionally biased toward polar residues; that stretch reads TSVNSSQEPALPMNQPSQSAGTK.

Belongs to the SepF family. As to quaternary structure, homodimer. Interacts with FtsZ.

The protein localises to the cytoplasm. In terms of biological role, cell division protein that is part of the divisome complex and is recruited early to the Z-ring. Probably stimulates Z-ring formation, perhaps through the cross-linking of FtsZ protofilaments. Its function overlaps with FtsA. The protein is Cell division protein SepF of Streptococcus pneumoniae (strain Taiwan19F-14).